We begin with the raw amino-acid sequence, 2196 residues long: Genome polyprotein (2196 aa).

A lipid anchor (N-myristoyl glycine; by host) is attached at Gly-2. Residues 2 to 1506 are Cytoplasmic-facing; that stretch reads GAQVSTQKTG…HVSRAFICLQ (1505 aa). An amphipathic alpha-helix region spans residues 568 to 584; that stretch reads DLQGDSEHAVESAVSRV. Active-site for protease 2A activity residues include His-883 and Asp-901. Residues Cys-918 and Cys-920 each coordinate Zn(2+). Catalysis depends on Cys-972, which acts as the For protease 2A activity. 2 residues coordinate Zn(2+): Cys-978 and His-980. Positions 1112–1184 are membrane-binding; it reads NNGWLKKFTE…EQSAPSQSDQ (73 aa). Residues 1112–1250 are oligomerization; it reads NNGWLKKFTE…SPGAGKSVAT (139 aa). The segment at 1133-1137 is RNA-binding; that stretch reads AIKIQ. An SF3 helicase domain is found at 1216–1372; the sequence is EKKMSNYIQF…SMYSQNGKIN (157 aa). Residues Cys-1380, Cys-1392, and Cys-1397 each coordinate Zn(2+). Residues 1380-1397 form a C4-type; degenerate zinc finger; it reads CDEECCPVNFKKCCPLVC. The interval 1424-1431 is RNA-binding; sequence EYNHRHSV. Positions 1435–1440 are oligomerization; the sequence is LEALFQ. Residues 1507 to 1522 lie within the membrane without spanning it; sequence ALTTFVSVAGIIYIIY. The Cytoplasmic segment spans residues 1523-2196; it reads KLFAGFQGAY…TLRRKWLDSF (674 aa). Tyr-1532 bears the O-(5'-phospho-RNA)-tyrosine mark. Residues 1552 to 1730 enclose the Peptidase C3 domain; it reads GPAFEFAVAM…FSAALLKHYF (179 aa). Active-site for protease 3C activity residues include His-1591, Glu-1622, and Cys-1698. Residues 1961-2077 form the RdRp catalytic domain; sequence GHLIAFDYSG…SYPWPIDASL (117 aa). Mg(2+) contacts are provided by Asp-1967 and Asp-2063.

Belongs to the picornaviruses polyprotein family. As to quaternary structure, interacts with capsid protein VP1 and capsid protein VP3 to form heterotrimeric protomers. Interacts with capsid protein VP0, and capsid protein VP3 to form heterotrimeric protomers. Five protomers subsequently associate to form pentamers which serve as building blocks for the capsid. Interacts with capsid protein VP2, capsid protein VP3 and capsid protein VP4 following cleavage of capsid protein VP0. In terms of assembly, interacts with capsid protein VP1 and capsid protein VP3 in the mature capsid. As to quaternary structure, interacts with capsid protein VP0 and capsid protein VP1 to form heterotrimeric protomers. Five protomers subsequently associate to form pentamers which serve as building blocks for the capsid. Interacts with capsid protein VP4 in the mature capsid. Interacts with protein 2C; this interaction may be important for virion morphogenesis. Interacts with capsid protein VP1 and capsid protein VP3. In terms of assembly, homodimer. As to quaternary structure, homohexamer; forms a hexameric ring structure with 6-fold symmetry characteristic of AAA+ ATPases. Interacts (via N-terminus) with host RTN3 (via reticulon domain); this interaction is important for viral replication. Interacts with capsid protein VP3; this interaction may be important for virion morphogenesis. Interacts with protein 3CD. In terms of assembly, homodimer. Interacts with host GBF1. Interacts (via GOLD domain) with host ACBD3 (via GOLD domain); this interaction allows the formation of a viral protein 3A/ACBD3 heterotetramer with a 2:2 stoichiometry, which will stimulate the recruitment of host PI4KB in order to synthesize PI4P at the viral RNA replication sites. As to quaternary structure, interacts with RNA-directed RNA polymerase. Interacts with protein 3AB and with RNA-directed RNA polymerase. In terms of assembly, interacts with Viral protein genome-linked and with protein 3CD. Mg(2+) is required as a cofactor. Specific enzymatic cleavages in vivo by the viral proteases yield processing intermediates and the mature proteins. In terms of processing, myristoylation is required for the formation of pentamers during virus assembly. Further assembly of 12 pentamers and a molecule of genomic RNA generates the provirion. Post-translationally, during virion maturation, immature virions are rendered infectious following cleavage of VP0 into VP4 and VP2. This maturation seems to be an autocatalytic event triggered by the presence of RNA in the capsid and it is followed by a conformational change infectious virion. Myristoylation is required during RNA encapsidation and formation of the mature virus particle. In terms of processing, VPg is uridylylated by the polymerase into VPg-pUpU. This acts as a nucleotide-peptide primer for the genomic RNA replication.

The protein localises to the virion. Its subcellular location is the host cytoplasm. It localises to the host cytoplasmic vesicle membrane. It is found in the host nucleus. The enzyme catalyses a ribonucleoside 5'-triphosphate + H2O = a ribonucleoside 5'-diphosphate + phosphate + H(+). It carries out the reaction Selective cleavage of Tyr-|-Gly bond in the picornavirus polyprotein.. The catalysed reaction is RNA(n) + a ribonucleoside 5'-triphosphate = RNA(n+1) + diphosphate. It catalyses the reaction Selective cleavage of Gln-|-Gly bond in the poliovirus polyprotein. In other picornavirus reactions Glu may be substituted for Gln, and Ser or Thr for Gly.. Its activity is regulated as follows. Replication or transcription is subject to high level of random mutations by the nucleotide analog ribavirin. Functionally, forms an icosahedral capsid of pseudo T=3 symmetry with capsid proteins VP2 and VP3. The capsid is 300 Angstroms in diameter, composed of 60 copies of each capsid protein and enclosing the viral positive strand RNA genome. Capsid protein VP1 mainly forms the vertices of the capsid. Capsid protein VP1 interacts with host cell receptor to provide virion attachment to target host cells. This attachment induces virion internalization. Tyrosine kinases are probably involved in the entry process. After binding to its receptor, the capsid undergoes conformational changes. Capsid protein VP1 N-terminus (that contains an amphipathic alpha-helix) and capsid protein VP4 are externalized. Together, they shape a pore in the host membrane through which viral genome is translocated to host cell cytoplasm. In terms of biological role, forms an icosahedral capsid of pseudo T=3 symmetry with capsid proteins VP2 and VP3. The capsid is 300 Angstroms in diameter, composed of 60 copies of each capsid protein and enclosing the viral positive strand RNA genome. Its function is as follows. Lies on the inner surface of the capsid shell. After binding to the host receptor, the capsid undergoes conformational changes. Capsid protein VP4 is released, Capsid protein VP1 N-terminus is externalized, and together, they shape a pore in the host membrane through which the viral genome is translocated into the host cell cytoplasm. Component of immature procapsids, which is cleaved into capsid proteins VP4 and VP2 after maturation. Allows the capsid to remain inactive before the maturation step. Functionally, cysteine protease that cleaves viral polyprotein and specific host proteins. It is responsible for the autocatalytic cleavage between the P1 and P2 regions, which is the first cleavage occurring in the polyprotein. Also cleaves the host translation initiation factor EIF4G1, in order to shut down the capped cellular mRNA translation. Inhibits the host nucleus-cytoplasm protein and RNA trafficking by cleaving host members of the nuclear pores. Counteracts stress granule formation probably by antagonizing its assembly or promoting its dissassembly. In terms of biological role, plays an essential role in the virus replication cycle by acting as a viroporin. Creates a pore in the host endoplasmic reticulum and as a consequence releases Ca2+ in the cytoplasm of infected cell. In turn, high levels of cytoplasmic calcium may trigger membrane trafficking and transport of viral ER-associated proteins to viroplasms, sites of viral genome replication. Its function is as follows. Induces and associates with structural rearrangements of intracellular membranes. Displays RNA-binding, nucleotide binding and NTPase activities. May play a role in virion morphogenesis and viral RNA encapsidation by interacting with the capsid protein VP3. Localizes the viral replication complex to the surface of membranous vesicles. Together with protein 3CD binds the Cis-Active RNA Element (CRE) which is involved in RNA synthesis initiation. Acts as a cofactor to stimulate the activity of 3D polymerase, maybe through a nucleid acid chaperone activity. Functionally, localizes the viral replication complex to the surface of membranous vesicles. It inhibits host cell endoplasmic reticulum-to-Golgi apparatus transport and causes the disassembly of the Golgi complex, possibly through GBF1 interaction. This would result in depletion of MHC, trail receptors and IFN receptors at the host cell surface. Plays an essential role in viral RNA replication by recruiting ACBD3 and PI4KB at the viral replication sites, thereby allowing the formation of the rearranged membranous structures where viral replication takes place. In terms of biological role, acts as a primer for viral RNA replication and remains covalently bound to viral genomic RNA. VPg is uridylylated prior to priming replication into VPg-pUpU. The oriI viral genomic sequence may act as a template for this. The VPg-pUpU is then used as primer on the genomic RNA poly(A) by the RNA-dependent RNA polymerase to replicate the viral genome. During genome replication, the VPg-RNA linkage is removed by the host TDP2, thereby accelerating replication. During the late stage of the replication cycle, host TDP2 is excluded from sites of viral RNA synthesis and encapsidation, allowing for the generation of progeny virions. Its function is as follows. Involved in the viral replication complex and viral polypeptide maturation. It exhibits protease activity with a specificity and catalytic efficiency that is different from protease 3C. Protein 3CD lacks polymerase activity. Protein 3CD binds to the 5'UTR of the viral genome. Replicates the viral genomic RNA on the surface of intracellular membranes. May form linear arrays of subunits that propagate along a strong head-to-tail interaction called interface-I. Covalently attaches UMP to a tyrosine of VPg, which is used to prime RNA synthesis. The positive stranded RNA genome is first replicated at virus induced membranous vesicles, creating a dsRNA genomic replication form. This dsRNA is then used as template to synthesize positive stranded RNA genomes. ss(+)RNA genomes are either translated, replicated or encapsidated. Functionally, major viral protease that mediates proteolytic processing of the polyprotein. Cleaves host EIF5B, contributing to host translation shutoff. Also cleaves host PABPC1, contributing to host translation shutoff. Cleaves host NLRP1, triggers host N-glycine-mediated degradation of the autoinhibitory NLRP1 N-terminal fragment. In Homo sapiens (Human), this protein is Genome polyprotein.